The sequence spans 358 residues: MSRLETFYDVMRRQGITRRSFLKYCSLTAAALGLGPAFAPRIAHAMETKPRTPVLWLHGLECTCCSESFIRSAHPLVKDVVLSMISLDYDDTLMAAAGHQAEAALEETMRKYKGEYILAVEGNPPLNEDGMFCIVGGKPFIEQLRHVAKDAKAVIAWGSCASWGCVQAARPNPTQAVPIHKVITDKPIVKVPGCPPIAEVMTGVITYMLTFGKLPELDRQGRPKMFYGQRIHDKCYRRPHFDAGQFVEHWDDEGARKGYCLYKVGCKGPTSYNACSTVRWNEGTSFPIQAGHGCIGCSEDGFWDKGSFYERLTTIPQFGIEKNADEIGAAVAGGVGAAIAAHAAVTAIKRLQNKGDRP.

The segment at residues 1–45 (MSRLETFYDVMRRQGITRRSFLKYCSLTAAALGLGPAFAPRIAHA) is a signal peptide (tat-type signal). The [4Fe-4S] cluster site is built by C62, C65, C160, C194, H232, C235, C260, and C266. [3Fe-4S] cluster-binding residues include C275, C294, and C297.

Belongs to the [NiFe]/[NiFeSe] hydrogenase small subunit family. Heterodimer of a large and a small subunit. [4Fe-4S] cluster serves as cofactor. The cofactor is [3Fe-4S] cluster. In terms of processing, predicted to be exported by the Tat system. The position of the signal peptide cleavage has been experimentally proven.

The protein resides in the cell membrane. The enzyme catalyses H2 + A = AH2. Functionally, this enzyme recycles the H(2) produced by nitrogenase to increase the production of ATP and to protect nitrogenase against inhibition or damage by O(2) under carbon- or phosphate-limited conditions. In Azotobacter vinelandii, this protein is Uptake hydrogenase small subunit (hoxK).